A 203-amino-acid polypeptide reads, in one-letter code: Outer-membrane lipoprotein LolB (203 aa).

The N-terminal stretch at 1–18 (MYRLLCLLALLTAAGLMG) is a signal peptide. Residue cysteine 19 is the site of N-palmitoyl cysteine attachment. A lipid anchor (S-diacylglycerol cysteine) is attached at cysteine 19.

Belongs to the LolB family. Monomer.

It localises to the cell outer membrane. In terms of biological role, plays a critical role in the incorporation of lipoproteins in the outer membrane after they are released by the LolA protein. This Cellvibrio japonicus (strain Ueda107) (Pseudomonas fluorescens subsp. cellulosa) protein is Outer-membrane lipoprotein LolB.